The primary structure comprises 1452 residues: ABC multidrug transporter A-1 (1452 aa).

A disordered region spans residues 1–20 (MNESHEAGKNSSTNVEEREE). 5 N-linked (GlcNAc...) asparagine glycosylation sites follow: N2, N10, N228, N287, and N311. An ABC transporter 1 domain is found at 110-363 (LKTLSLARIA…FLQMGFVCPD (254 aa)). 6 helical membrane-spanning segments follow: residues 474 to 494 (VTIS…SIFY), 508 to 528 (ALLF…MLTL), 554 to 574 (MIMD…VLYF), 583 to 603 (GAFF…SMFF), 616 to 636 (VLPF…FAIP), and 725 to 745 (IGVI…ATDF). The ABC transporter 2 domain maps to 802–1044 (FQWKDVCFDI…ILIDYFVRNG (243 aa)). 838-845 (GVSGAGKT) serves as a coordination point for ATP. Transmembrane regions (helical) follow at residues 1153–1173 (ALCV…PNTI), 1183–1203 (IFML…HFVA), 1223–1243 (FLIA…VLMF), 1271–1291 (LMIW…IAAF), 1297–1317 (AGNL…VLAT), and 1324–1344 (FWIF…MLSV). Residues N1350, N1365, and N1391 are each glycosylated (N-linked (GlcNAc...) asparagine). Residues 1418-1438 (FGLMWVFIVFNIFAACSLYWW) traverse the membrane as a helical segment.

This sequence belongs to the ABC transporter superfamily. ABCG family. PDR (TC 3.A.1.205) subfamily.

The protein resides in the membrane. In terms of biological role, ABC transporter that seems not to be involved in the efflux of toxic substances, at least not the classical compounds such as itraconazole, amphotericin B, voriconazole, posaconazole, ravuconazole, or echinocandins. The chain is ABC multidrug transporter A-1 from Aspergillus fumigatus (strain ATCC MYA-4609 / CBS 101355 / FGSC A1100 / Af293) (Neosartorya fumigata).